The chain runs to 222 residues: Exosome complex component Rrp4 (222 aa).

An S1 motif domain is found at glycine 63–arginine 131.

The protein belongs to the RRP4 family. In terms of assembly, component of the archaeal exosome complex. Forms a trimer of Rrp4 and/or Csl4 subunits. The trimer associates with a hexameric ring-like arrangement composed of 3 Rrp41-Rrp42 heterodimers.

The protein resides in the cytoplasm. Non-catalytic component of the exosome, which is a complex involved in RNA degradation. Increases the RNA binding and the efficiency of RNA degradation. Confers strong poly(A) specificity to the exosome. This is Exosome complex component Rrp4 from Methanosphaera stadtmanae (strain ATCC 43021 / DSM 3091 / JCM 11832 / MCB-3).